Here is a 777-residue protein sequence, read N- to C-terminus: Proton-coupled zinc antiporter SLC30A5 (777 aa).

The Cytoplasmic portion of the chain corresponds to 1 to 28; it reads MEEKYSSNVMSSGRLGPVDAPESRLTRY. Residues 29–49 form a helical membrane-spanning segment; that stretch reads IVLLCFTKFLKALGIFESYDL. Residues 50–52 lie on the Lumenal side of the membrane; the sequence is LKV. Residues 53–73 traverse the membrane as a helical segment; it reads VHIVQFIFILKLGSTCFMVLF. The Cytoplasmic portion of the chain corresponds to 74 to 94; it reads QKPFSSGKSITKRQWVSIVKH. A helical transmembrane segment spans residues 95 to 115; the sequence is AFVSCIISLLWFFGLTLCGPL. The Lumenal segment spans residues 116–117; sequence RT. A helical membrane pass occupies residues 118–138; the sequence is LLLFEHSDIVVISLLTVLFTG. At 139–148 the chain is on the cytoplasmic side; sequence SGGGPSKTRG. A helical transmembrane segment spans residues 149 to 169; the sequence is AAFFIIAVICLLLFDNDDLMA. Topologically, residues 170–189 are lumenal; the sequence is KIAEHPEGHHDSALTHFLYR. A helical membrane pass occupies residues 190–210; sequence AFFLLGVADHKGGVLLLVLAL. Residues 211–234 are Cytoplasmic-facing; the sequence is CFNVGFHTASRKLSLDIGGAKRLQ. Residues 235–255 traverse the membrane as a helical segment; it reads ALSHLVSVIILSPWVIILSAT. The Lumenal segment spans residues 256 to 263; the sequence is TESKIESW. Residues 264–284 traverse the membrane as a helical segment; it reads SALIMPFMTVIFSVMIMDFYV. Topologically, residues 285 to 299 are cytoplasmic; the sequence is ESVCSVKMEPSKCAR. Residues 300 to 320 form a helical membrane-spanning segment; that stretch reads YGSFLIFASALLLGNFWTHPI. Residues 321–338 are Lumenal-facing; the sequence is TDQLRAMNKPAHQLHTEH. A helical membrane pass occupies residues 339–359; that stretch reads VLSGGVVVSAIFFILSAQILA. The Cytoplasmic portion of the chain corresponds to 360-414; that stretch reads SSSRKGQRGTLVGYSPEGTPLYNFMGDALHNTSPSMPRFLKDSLKQILEEYDSRQ. Residues 415–435 form a helical membrane-spanning segment; the sequence is IFYFLCLNLAFTFVEIFYGVW. The Lumenal segment spans residues 436 to 444; that stretch reads TNSLGLLSD. Residues 445–465 traverse the membrane as a helical segment; it reads GFHMLFDCSALVMGLIAALMT. Residues His447 and Asp451 each coordinate Zn(2+). At 466-484 the chain is on the cytoplasmic side; it reads RWKATRIFSYGYGRVEILS. Residues 485-505 traverse the membrane as a helical segment; it reads GFINGLFLVVIAFFVFIEAVA. At 506 to 516 the chain is on the lumenal side; sequence RIYDPPDINTD. A helical membrane pass occupies residues 517-537; that stretch reads MLTPVSVGGLIVNLVGICAFS. The his-rich loop; required for zinc transport stretch occupies residues 538–586; sequence HAHSHGAARGGCPSHDHGHSHHGHGHSHGHNHGHSHSDHGHNHGHTHNH. At 538 to 604 the chain is on the cytoplasmic side; sequence HAHSHGAARG…VGMNANMRGV (67 aa). Residues 547 to 593 form a disordered region; it reads GGCPSHDHGHSHHGHGHSHGHNHGHSHSDHGHNHGHTHNHGHSHGSA. 2 stretches are compositionally biased toward basic residues: residues 555–571 and 579–589; these read GHSHHGHGHSHGHNHGH and NHGHTHNHGHS. A helical membrane pass occupies residues 605–625; that stretch reads FSHVLADTLGSVGVIVSTILI. Zn(2+) is bound by residues His607 and Asp611. The Lumenal segment spans residues 626–629; the sequence is RQFG. The chain crosses the membrane as a helical span at residues 630-650; that stretch reads WLIADPLCSLFIAVLIFGSVL. Residues 651–777 lie on the Cytoplasmic side of the membrane; the sequence is PLLKDACQVI…KYYKDGTYIM (127 aa).

Belongs to the cation diffusion facilitator (CDF) transporter (TC 2.A.4) family. SLC30A subfamily. As to quaternary structure, heterodimer with SLC30A6/ZNT6; form a functional zinc ion transmembrane transporter.

It is found in the golgi apparatus. The protein localises to the golgi stack membrane. The protein resides in the cytoplasmic vesicle. It localises to the COPII-coated vesicle membrane. Its subcellular location is the secretory vesicle membrane. It is found in the trans-Golgi network membrane. It catalyses the reaction Zn(2+)(in) + 2 H(+)(out) = Zn(2+)(out) + 2 H(+)(in). Together with SLC30A6 forms a functional proton-coupled zinc ion antiporter mediating zinc entry into the lumen of organelles along the secretory pathway. By contributing to zinc ion homeostasis within the early secretory pathway, regulates the activation and folding of enzymes like alkaline phosphatases and enzymes involved in phosphatidylinositol glycan anchor biosynthesis. In Xenopus tropicalis (Western clawed frog), this protein is Proton-coupled zinc antiporter SLC30A5 (slc30a5).